The sequence spans 76 residues: Translational regulator CsrA (76 aa).

The protein belongs to the CsrA/RsmA family. Homodimer; the beta-strands of each monomer intercalate to form a hydrophobic core, while the alpha-helices form wings that extend away from the core.

It localises to the cytoplasm. Its function is as follows. A translational regulator that binds mRNA to regulate translation initiation and/or mRNA stability. Usually binds in the 5'-UTR at or near the Shine-Dalgarno sequence preventing ribosome-binding, thus repressing translation. Its main target seems to be the major flagellin gene, while its function is anatagonized by FliW. The sequence is that of Translational regulator CsrA from Wolinella succinogenes (strain ATCC 29543 / DSM 1740 / CCUG 13145 / JCM 31913 / LMG 7466 / NCTC 11488 / FDC 602W) (Vibrio succinogenes).